A 367-amino-acid chain; its full sequence is C-C chemokine receptor type 9 (367 aa).

Residues 1–46 (MVPTEATSLILNPSDDYGYDGTPPMEYDTNLTDYFCEKSHVRQFAG) are Extracellular-facing. N-linked (GlcNAc...) asparagine glycosylation occurs at Asn30. 2 disulfides stabilise this stretch: Cys36-Cys287 and Cys117-Cys196. The helical transmembrane segment at 47-72 (HFLPPLYWLVFIVGAVGNSLVILVYW) threads the bilayer. The Cytoplasmic segment spans residues 73-83 (YCTRVKTMTDM). The helical transmembrane segment at 84–107 (FLLNLAIADLLFLTTLPFWAIAAA) threads the bilayer. At 108-118 (DQWKFQTFMCK) the chain is on the extracellular side. A helical transmembrane segment spans residues 119–148 (VVNSMYKMNFYSCVLLIMCISVDRYIAIAQ). Residues 149–157 (AMRAQMWRQ) lie on the Cytoplasmic side of the membrane. A helical transmembrane segment spans residues 158-183 (KRLLYSKMVCFTIWVMAAALCLPELL). The Extracellular segment spans residues 184-206 (YSQVKEEHGTAICTVVYSSNEST). Asn203 carries an N-linked (GlcNAc...) asparagine glycan. The helical transmembrane segment at 207–241 (KLKSAVLTLKVTLGFFLPFVVMACCYAIIIHTLIR) threads the bilayer. Over 242-246 (AKKSS) the chain is Cytoplasmic. Residues 247-281 (KHKALKVTITVLTVFVLSQFPHNCVLLVQTIDAYA) form a helical membrane-spanning segment. The Extracellular segment spans residues 282–288 (TFISSCA). Residues 289-319 (LSIKIDICFQVTQTVAFFHSCLNPVLYVFVG) traverse the membrane as a helical segment. Residues 320–367 (ERFRRDLVKTLKNLGCISQAQWVSFTRREGSLKLSSMLLETTSGALSF) lie on the Cytoplasmic side of the membrane.

This sequence belongs to the G-protein coupled receptor 1 family.

It is found in the cell membrane. In terms of biological role, receptor for chemokine SCYA25/TECK. Subsequently transduces a signal by increasing the intracellular calcium ions level. The polypeptide is C-C chemokine receptor type 9 (CCR9) (Ovis aries (Sheep)).